Here is a 95-residue protein sequence, read N- to C-terminus: Large ribosomal subunit protein uL23 (95 aa).

Belongs to the universal ribosomal protein uL23 family. Part of the 50S ribosomal subunit. Contacts protein L29, and trigger factor when it is bound to the ribosome.

In terms of biological role, one of the early assembly proteins it binds 23S rRNA. One of the proteins that surrounds the polypeptide exit tunnel on the outside of the ribosome. Forms the main docking site for trigger factor binding to the ribosome. The chain is Large ribosomal subunit protein uL23 from Rubrobacter xylanophilus (strain DSM 9941 / JCM 11954 / NBRC 16129 / PRD-1).